The sequence spans 475 residues: Aspartyl/glutamyl-tRNA(Asn/Gln) amidotransferase subunit B (475 aa).

Belongs to the GatB/GatE family. GatB subfamily. In terms of assembly, heterotrimer of A, B and C subunits.

The enzyme catalyses L-glutamyl-tRNA(Gln) + L-glutamine + ATP + H2O = L-glutaminyl-tRNA(Gln) + L-glutamate + ADP + phosphate + H(+). It carries out the reaction L-aspartyl-tRNA(Asn) + L-glutamine + ATP + H2O = L-asparaginyl-tRNA(Asn) + L-glutamate + ADP + phosphate + 2 H(+). Allows the formation of correctly charged Asn-tRNA(Asn) or Gln-tRNA(Gln) through the transamidation of misacylated Asp-tRNA(Asn) or Glu-tRNA(Gln) in organisms which lack either or both of asparaginyl-tRNA or glutaminyl-tRNA synthetases. The reaction takes place in the presence of glutamine and ATP through an activated phospho-Asp-tRNA(Asn) or phospho-Glu-tRNA(Gln). The polypeptide is Aspartyl/glutamyl-tRNA(Asn/Gln) amidotransferase subunit B (Staphylococcus aureus (strain bovine RF122 / ET3-1)).